A 207-amino-acid polypeptide reads, in one-letter code: Protein FAM177A1 (207 aa).

N-acetylmethionine is present on Met-1. Phosphoserine is present on Ser-65. The residue at position 66 (Thr-66) is a Phosphothreonine. Residues 131-170 (IDEYYRMKKEEEEEEEENRMSEEAERQYQQNKLQADSIVQ) are a coiled coil. A disordered region spans residues 142-176 (EEEEEENRMSEEAERQYQQNKLQADSIVQTDQPET). Residues 157–176 (QYQQNKLQADSIVQTDQPET) show a composition bias toward polar residues.

This sequence belongs to the FAM177 family.

The protein is Protein FAM177A1 (Fam177a1) of Mus musculus (Mouse).